A 207-amino-acid chain; its full sequence is UPF0126 inner membrane protein YadS (207 aa).

Residues 1-21 (MLVYWLDIVGTAVFAISGVLL) traverse the membrane as a helical segment. The Cytoplasmic segment spans residues 22–29 (AGKLRMDP). The chain crosses the membrane as a helical span at residues 30–50 (FGVLVLGVVTAVGGGTIRDMA). Residues 51–58 (LDHGPVFW) lie on the Periplasmic side of the membrane. A helical membrane pass occupies residues 59–79 (VKDPTDLVVAMVTSMLTIVLV). The Cytoplasmic portion of the chain corresponds to 80-85 (RQPRRL). Residues 86–106 (PKWMLPVLDAVGLAVFVGIGV) traverse the membrane as a helical segment. At 107 to 112 (NKAFNA) the chain is on the periplasmic side. The helical transmembrane segment at 113–133 (EAGPLIAVCMGVITGVGGGII) threads the bilayer. At 134-148 (RDVLAREIPMILRTE) the chain is on the cytoplasmic side. The chain crosses the membrane as a helical span at residues 149-169 (IYATACIIGGIVHATAYYTFS). Residue Val-170 is a topological domain, periplasmic. A helical transmembrane segment spans residues 171-191 (PLETASMMGMVVTLLIRLAAI). The Cytoplasmic portion of the chain corresponds to 192–207 (RWHLKLPTFALDENGR).

This sequence belongs to the UPF0126 family.

It is found in the cell inner membrane. The sequence is that of UPF0126 inner membrane protein YadS (yadS) from Escherichia coli O6:H1 (strain CFT073 / ATCC 700928 / UPEC).